The primary structure comprises 270 residues: Karrikin insensitive 2 receptor CA (270 aa).

Catalysis depends on S95, which acts as the Nucleophile. Catalysis depends on residues D217 and H246.

It belongs to the AB hydrolase superfamily. Expressed in stigma.

It is found in the nucleus. The protein localises to the cytoplasm. Its function is as follows. Hydrolase which may be involved in plant olfaction during volatile communication. This is Karrikin insensitive 2 receptor CA from Petunia hybrida (Petunia).